An 84-amino-acid chain; its full sequence is Cell division topological specificity factor (84 aa).

The protein belongs to the MinE family.

In terms of biological role, prevents the cell division inhibition by proteins MinC and MinD at internal division sites while permitting inhibition at polar sites. This ensures cell division at the proper site by restricting the formation of a division septum at the midpoint of the long axis of the cell. The chain is Cell division topological specificity factor from Cupriavidus taiwanensis (strain DSM 17343 / BCRC 17206 / CCUG 44338 / CIP 107171 / LMG 19424 / R1) (Ralstonia taiwanensis (strain LMG 19424)).